The following is a 139-amino-acid chain: MPDAKTKTTDDKVIKSEEQWRRELSPIQYAVLREKATERPFSGEYEHDHRAGTYVCAGCGNVLFESDAKFDSGCGWPSFTQPAVESHVDEERDVSHGMIRTEVLCAKCSGHLGHVFPDGPGPTGLRYCINSAALKLEPK.

A MsrB domain is found at 17-139 (EEQWRRELSP…NSAALKLEPK (123 aa)). The Zn(2+) site is built by Cys56, Cys59, Cys105, and Cys108. The Nucleophile role is filled by Cys128.

This sequence belongs to the MsrB Met sulfoxide reductase family. The cofactor is Zn(2+).

It catalyses the reaction L-methionyl-[protein] + [thioredoxin]-disulfide + H2O = L-methionyl-(R)-S-oxide-[protein] + [thioredoxin]-dithiol. This Bradyrhizobium diazoefficiens (strain JCM 10833 / BCRC 13528 / IAM 13628 / NBRC 14792 / USDA 110) protein is Peptide methionine sulfoxide reductase MsrB.